The following is a 324-amino-acid chain: 1-deoxyxylulose-5-phosphate synthase YajO (324 aa).

Tyr61 functions as the Proton donor in the catalytic mechanism.

This sequence belongs to the aldo/keto reductase family. Aldo/keto reductase 2 subfamily.

It catalyses the reaction D-ribulose 5-phosphate + AH2 = 1-deoxy-D-xylulose 5-phosphate + A + H2O. With respect to regulation, NADH, NADPH or ATP do not increase activity. Functionally, catalyzes the conversion of ribulose 5-phosphate (Ru5P) to 1-deoxy-D-xylulose 5-phosphate (DXP), providing a direct route from pentoses to terpenes. May play a role in biosynthesis of DXP under conditions of thiamine starvation. This chain is 1-deoxyxylulose-5-phosphate synthase YajO (yajO), found in Escherichia coli (strain K12).